The sequence spans 810 residues: Cell division control protein 48 homolog E (810 aa).

An N-acetylserine modification is found at serine 2. Serine 41 carries the post-translational modification Phosphoserine. ATP-binding positions include 248–255 (GPPGSGKT) and 521–528 (GPPGCGKT).

The protein belongs to the AAA ATPase family.

It localises to the nucleus. The protein localises to the cytoplasm. It is found in the cytoskeleton. Its subcellular location is the phragmoplast. Its function is as follows. Probably functions in cell division and growth processes. Interacts with certain SNAREs as part of specialized membrane fusion events where vesicles from the same organelle fuse (homotypic fusion). In Arabidopsis thaliana (Mouse-ear cress), this protein is Cell division control protein 48 homolog E (CDC48E).